The sequence spans 176 residues: ADP-ribosylation factor-like protein 11 (176 aa).

The N-myristoyl glycine moiety is linked to residue Gly2. GTP contacts are provided by residues Gly19 to Thr26, Asp63 to Gln67, and Asn122 to Glu125.

It belongs to the small GTPase superfamily. Arf family.

Its function is as follows. May play a role in apoptosis. May act as a tumor suppressor. The polypeptide is ADP-ribosylation factor-like protein 11 (Arl11) (Mus musculus (Mouse)).